The following is a 447-amino-acid chain: Signal recognition particle protein (447 aa).

GTP-binding positions include 108–115, 190–194, and 248–251; these read GLQGSGKT, DTAGR, and TKLD.

This sequence belongs to the GTP-binding SRP family. SRP54 subfamily. Part of the signal recognition particle protein translocation system, which is composed of SRP and FtsY. Interacts with RNA.

The protein resides in the cytoplasm. The enzyme catalyses GTP + H2O = GDP + phosphate + H(+). Its function is as follows. Involved in targeting and insertion of nascent membrane proteins into the cytoplasmic membrane. Binds to the hydrophobic signal sequence of the ribosome-nascent chain (RNC) as it emerges from the ribosomes. The SRP-RNC complex is then targeted to the cytoplasmic membrane where it interacts with the SRP receptor FtsY. This Mycoplasma mycoides protein is Signal recognition particle protein.